The chain runs to 548 residues: CBS domain-containing protein CBSCBSPB4 (548 aa).

Residues 1–18 are compositionally biased toward polar residues; the sequence is MANQGGPSRKSLSFSGHS. Residues 1–58 form a disordered region; sequence MANQGGPSRKSLSFSGHSFQGRKKASENEGGGGGGSDLLPRRSLTSSRSSISLSGERS. Residue serine 18 is modified to Phosphoserine. Residues 37–56 show a composition bias toward low complexity; sequence DLLPRRSLTSSRSSISLSGE. CBS domains lie at 63 to 126, 133 to 190, 233 to 293, and 301 to 358; these read VKRL…NLEE, MTKN…ERSV, IIPE…LPQE, and MTPN…AGST. Positions 411-498 constitute a PB1 domain; that stretch reads PNTFAFKLQD…KGLKLHLDYT (88 aa). The chain crosses the membrane as a helical span at residues 521-543; the sequence is AAAYKTVAAGAALAAGLGVLVYL.

Its subcellular location is the membrane. This Arabidopsis thaliana (Mouse-ear cress) protein is CBS domain-containing protein CBSCBSPB4 (CBSCBSPB4).